Here is a 227-residue protein sequence, read N- to C-terminus: Large ribosomal subunit protein uL3 (227 aa).

This sequence belongs to the universal ribosomal protein uL3 family. In terms of assembly, part of the 50S ribosomal subunit. Forms a cluster with proteins L14 and L19.

Its function is as follows. One of the primary rRNA binding proteins, it binds directly near the 3'-end of the 23S rRNA, where it nucleates assembly of the 50S subunit. In Persephonella marina (strain DSM 14350 / EX-H1), this protein is Large ribosomal subunit protein uL3.